We begin with the raw amino-acid sequence, 177 residues long: Large ribosomal subunit protein uL6 (177 aa).

The protein belongs to the universal ribosomal protein uL6 family. Part of the 50S ribosomal subunit.

Functionally, this protein binds to the 23S rRNA, and is important in its secondary structure. It is located near the subunit interface in the base of the L7/L12 stalk, and near the tRNA binding site of the peptidyltransferase center. The sequence is that of Large ribosomal subunit protein uL6 from Yersinia enterocolitica serotype O:8 / biotype 1B (strain NCTC 13174 / 8081).